A 131-amino-acid polypeptide reads, in one-letter code: Single-stranded DNA-binding protein 2 (131 aa).

Residues 1–103 enclose the SSB domain; the sequence is MYNKVIMIGR…VLASSFQLLE (103 aa). The Important for interaction with partner proteins signature appears at 126 to 131; the sequence is EEELPF.

Homotetramer.

Functionally, plays an important role in DNA replication, recombination and repair. Binds to ssDNA and to an array of partner proteins to recruit them to their sites of action during DNA metabolism. This chain is Single-stranded DNA-binding protein 2 (ssb2), found in Streptococcus agalactiae serotype III (strain NEM316).